The sequence spans 121 residues: Cell division protein FtsL (121 aa).

Topologically, residues 1 to 34 (MISRVTEALSKVKGSMGSHERHALPGVIGDDLLR) are cytoplasmic. The chain crosses the membrane as a helical span at residues 35-57 (FGKLPLCLFICIILTAVTVVTTA). The Periplasmic portion of the chain corresponds to 58–121 (HHTRLLTAQR…PSQENIVVQK (64 aa)).

The protein belongs to the FtsL family. As to quaternary structure, part of a complex composed of FtsB, FtsL and FtsQ.

It localises to the cell inner membrane. Its function is as follows. Essential cell division protein. May link together the upstream cell division proteins, which are predominantly cytoplasmic, with the downstream cell division proteins, which are predominantly periplasmic. This Shigella dysenteriae serotype 1 (strain Sd197) protein is Cell division protein FtsL.